The primary structure comprises 176 residues: Telomerase RNA component interacting RNase (176 aa).

The segment covering 1-12 (MAARGRRAEPQG) has biased composition (basic and acidic residues). The interval 1 to 121 (MAARGRRAEP…TLSFVGKRRG (121 aa)) is disordered. Low complexity predominate over residues 45–56 (SGAGSSPVSGGV). Residues 68-83 (LFKRKMEEEQRQRQEE) are compositionally biased toward basic and acidic residues. Over residues 90–101 (RPDQSAAAAGPG) the composition is skewed to low complexity. Residue lysine 146 is modified to N6-acetyllysine.

In terms of assembly, part of the telomerase RNA 3' end complex which contains about 488 proteins.

Its activity is regulated as follows. Zn(2+) inhibits the RNase activity while Mg(2+), Ca(2+), Mn(2+), K(+), Na(+), EDTA and EGTA show little effect on the exoribonuclease activity. In terms of biological role, exoribonuclease that is part of the telomerase RNA 3' end processing complex and which has the ability to cleave all four unpaired RNA nucleotides from the 5' end or 3' end with higher efficiency for purine bases. The polypeptide is Telomerase RNA component interacting RNase (Homo sapiens (Human)).